A 27-amino-acid polypeptide reads, in one-letter code: uncharacterized protein (27 aa).

Its subcellular location is the plastid. It localises to the chloroplast. This is an uncharacterized protein from Anthoceros angustus (Hornwort).